The following is a 411-amino-acid chain: Arginine deiminase (411 aa).

Cys-401 (amidino-cysteine intermediate) is an active-site residue.

Belongs to the arginine deiminase family.

The protein resides in the cytoplasm. It carries out the reaction L-arginine + H2O = L-citrulline + NH4(+). It participates in amino-acid degradation; L-arginine degradation via ADI pathway; carbamoyl phosphate from L-arginine: step 1/2. This is Arginine deiminase from Staphylococcus haemolyticus (strain JCSC1435).